The following is a 389-amino-acid chain: Putative RNA methyltransferase R405 (389 aa).

3 residues coordinate S-adenosyl-L-methionine: Gln-207, Asp-261, and Asp-314. Catalysis depends on Cys-342, which acts as the Nucleophile.

This sequence belongs to the class I-like SAM-binding methyltransferase superfamily. RNA M5U methyltransferase family.

The protein is Putative RNA methyltransferase R405 of Acanthamoeba polyphaga (Amoeba).